Consider the following 257-residue polypeptide: MRDVQSEKDHRNIPINMVGIKGLKYPIIVMDRTNKRQHTIGTFNLFVDLPKDFRGTHMSRFVEVLDRHNMKVTPKNMESILDDMREALKATVAHVTVDFPYFIRKNAPISGIGSYSSYNCGFISTKNKEFDFILKVEVPVLTVCPCSKEISDRGAHNQRAMVNVQVRMNSLVWIEEIIEMVEDAASAPIFTLLKREDEKFITEVSYDNPRFVEDVSREVVLRFMNDPRISWYRVEVSSQESIHNHEAYACIEKGKSL.

This sequence belongs to the GTP cyclohydrolase IV family.

The catalysed reaction is GTP + H2O = 7,8-dihydroneopterin 3'-triphosphate + formate + H(+). The protein operates within cofactor biosynthesis; 7,8-dihydroneopterin triphosphate biosynthesis; 7,8-dihydroneopterin triphosphate from GTP: step 1/1. Its function is as follows. Converts GTP to 7,8-dihydroneopterin triphosphate. This is GTP cyclohydrolase FolE2 from Kosmotoga olearia (strain ATCC BAA-1733 / DSM 21960 / TBF 19.5.1).